Consider the following 413-residue polypeptide: Histidine--tRNA ligase (413 aa).

It belongs to the class-II aminoacyl-tRNA synthetase family. As to quaternary structure, homodimer.

It localises to the cytoplasm. The enzyme catalyses tRNA(His) + L-histidine + ATP = L-histidyl-tRNA(His) + AMP + diphosphate + H(+). In Fusobacterium nucleatum subsp. nucleatum (strain ATCC 25586 / DSM 15643 / BCRC 10681 / CIP 101130 / JCM 8532 / KCTC 2640 / LMG 13131 / VPI 4355), this protein is Histidine--tRNA ligase.